A 411-amino-acid polypeptide reads, in one-letter code: Chorismate synthase (411 aa).

NADP(+) contacts are provided by Arg-40 and Arg-46. FMN is bound by residues 135–137 and 256–257; these read RAS and QA. A disordered region spans residues 278–299; sequence HDGIARGADGRPRRTSDRAGGI. Basic and acidic residues predominate over residues 285-294; it reads ADGRPRRTSD. Residues Ala-301, 316 to 320, and Arg-342 contribute to the FMN site; that span reads KPIAT.

This sequence belongs to the chorismate synthase family. As to quaternary structure, homotetramer. Requires FMNH2 as cofactor.

It catalyses the reaction 5-O-(1-carboxyvinyl)-3-phosphoshikimate = chorismate + phosphate. The protein operates within metabolic intermediate biosynthesis; chorismate biosynthesis; chorismate from D-erythrose 4-phosphate and phosphoenolpyruvate: step 7/7. Its function is as follows. Catalyzes the anti-1,4-elimination of the C-3 phosphate and the C-6 proR hydrogen from 5-enolpyruvylshikimate-3-phosphate (EPSP) to yield chorismate, which is the branch point compound that serves as the starting substrate for the three terminal pathways of aromatic amino acid biosynthesis. This reaction introduces a second double bond into the aromatic ring system. This is Chorismate synthase from Micrococcus luteus (strain ATCC 4698 / DSM 20030 / JCM 1464 / CCM 169 / CCUG 5858 / IAM 1056 / NBRC 3333 / NCIMB 9278 / NCTC 2665 / VKM Ac-2230) (Micrococcus lysodeikticus).